Consider the following 299-residue polypeptide: Probable lipid kinase YegS-like (299 aa).

Residues 1-129 (MSERKALLIL…IDLGEVGGQM (129 aa)) form the DAGKc domain. ATP-binding positions include threonine 39, 65 to 71 (GDGTLRD), and threonine 92. Mg(2+)-binding residues include leucine 210, aspartate 213, and leucine 215. Glutamate 268 serves as the catalytic Proton acceptor.

It belongs to the diacylglycerol/lipid kinase family. YegS lipid kinase subfamily. Requires Mg(2+) as cofactor. Ca(2+) is required as a cofactor.

Its subcellular location is the cytoplasm. Its function is as follows. Probably phosphorylates lipids; the in vivo substrate is unknown. This chain is Probable lipid kinase YegS-like, found in Pseudomonas fluorescens (strain ATCC BAA-477 / NRRL B-23932 / Pf-5).